A 102-amino-acid polypeptide reads, in one-letter code: MQKARIKLASTNVRSLEEVANQIKQIAERTGVRMSGPIPLPTKRIRIVTRKSPDGEGSATFDRWELRIHKRLIDIEADERAMRQIMRIRVPEDVTIEIELIS.

Belongs to the universal ribosomal protein uS10 family. As to quaternary structure, part of the 30S ribosomal subunit.

Its function is as follows. Involved in the binding of tRNA to the ribosomes. The protein is Small ribosomal subunit protein uS10 of Pyrococcus abyssi (strain GE5 / Orsay).